The chain runs to 126 residues: Large ribosomal subunit protein bL12 (126 aa).

This sequence belongs to the bacterial ribosomal protein bL12 family. In terms of assembly, homodimer. Part of the ribosomal stalk of the 50S ribosomal subunit. Forms a multimeric L10(L12)X complex, where L10 forms an elongated spine to which 2 to 4 L12 dimers bind in a sequential fashion. Binds GTP-bound translation factors.

Functionally, forms part of the ribosomal stalk which helps the ribosome interact with GTP-bound translation factors. Is thus essential for accurate translation. The protein is Large ribosomal subunit protein bL12 of Solibacter usitatus (strain Ellin6076).